A 582-amino-acid polypeptide reads, in one-letter code: Aspartate--tRNA ligase (582 aa).

L-aspartate is bound at residue glutamate 174. The tract at residues glutamine 198–lysine 201 is aspartate. Arginine 220 is a binding site for L-aspartate. ATP-binding positions include arginine 220 to glutamate 222 and glutamine 229. Histidine 443 provides a ligand contact to L-aspartate. Glutamate 477 provides a ligand contact to ATP. Position 484 (arginine 484) interacts with L-aspartate. Glycine 529–arginine 532 provides a ligand contact to ATP.

The protein belongs to the class-II aminoacyl-tRNA synthetase family. Type 1 subfamily. In terms of assembly, homodimer.

It localises to the cytoplasm. The enzyme catalyses tRNA(Asp) + L-aspartate + ATP = L-aspartyl-tRNA(Asp) + AMP + diphosphate. Its function is as follows. Catalyzes the attachment of L-aspartate to tRNA(Asp) in a two-step reaction: L-aspartate is first activated by ATP to form Asp-AMP and then transferred to the acceptor end of tRNA(Asp). The protein is Aspartate--tRNA ligase of Streptococcus pyogenes serotype M3 (strain ATCC BAA-595 / MGAS315).